The following is a 125-amino-acid chain: Large ribosomal subunit protein bL12 (125 aa).

Belongs to the bacterial ribosomal protein bL12 family. In terms of assembly, homodimer. Part of the ribosomal stalk of the 50S ribosomal subunit. Forms a multimeric L10(L12)X complex, where L10 forms an elongated spine to which 2 to 4 L12 dimers bind in a sequential fashion. Binds GTP-bound translation factors.

Its function is as follows. Forms part of the ribosomal stalk which helps the ribosome interact with GTP-bound translation factors. Is thus essential for accurate translation. The chain is Large ribosomal subunit protein bL12 from Chlorobium limicola (strain DSM 245 / NBRC 103803 / 6330).